The following is a 341-amino-acid chain: L-threonine 3-dehydrogenase (341 aa).

Cys38 lines the Zn(2+) pocket. Residues Thr40 and His43 each act as charge relay system in the active site. Zn(2+) is bound by residues His63, Glu64, Cys93, Cys96, Cys99, and Cys107. Residues Ile175, Asp195, Arg200, 262–264 (LGI), and 286–287 (IY) contribute to the NAD(+) site.

This sequence belongs to the zinc-containing alcohol dehydrogenase family. Homotetramer. Requires Zn(2+) as cofactor.

The protein resides in the cytoplasm. The catalysed reaction is L-threonine + NAD(+) = (2S)-2-amino-3-oxobutanoate + NADH + H(+). The protein operates within amino-acid degradation; L-threonine degradation via oxydo-reductase pathway; glycine from L-threonine: step 1/2. Its function is as follows. Catalyzes the NAD(+)-dependent oxidation of L-threonine to 2-amino-3-ketobutyrate. This Klebsiella pneumoniae subsp. pneumoniae (strain ATCC 700721 / MGH 78578) protein is L-threonine 3-dehydrogenase.